A 264-amino-acid chain; its full sequence is Apolipoprotein A-I (264 aa).

The first 18 residues, 1-18 (MKAVVLTVAVFFLTGSQA), serve as a signal peptide directing secretion. A run of 2 repeats spans residues 67–88 (LKLLDNWDSLSSTVSKLREQIG) and 89–110 (PVTQEFWDKLEKDTVSLRQEMN). The segment at 67 to 264 (LKLLDNWDSL…DEATKKLTTQ (198 aa)) is 10 X approximate tandem repeats. A Methionine sulfoxide modification is found at Met109. The stretch at 111 to 121 (KDLEEVKLKVQ) is one 3; half-length repeat. 3 repeat units span residues 122-143 (PYLDEFQKRWQEDVERYRQQVE), 144-165 (PLGTELREGARQKLQELHEKLS), and 166-187 (PLGQELRDRARAHVDALRTHLA). The 7; truncated repeat unit spans residues 188 to 207 (PYSDELRQRLAARLEALKES). Repeat unit 8 spans residues 208–229 (SSLADYQAKATEHLSALGEKAK). Residues 230 to 240 (PALEDLRQGLL) form a 9; half-length repeat. Residues 241-264 (PVLENLKMSFWSAVDEATKKLTTQ) form repeat 10.

This sequence belongs to the apolipoprotein A1/A4/E family. Homodimer. Interacts with APOA1BP and CLU. Component of a sperm activating protein complex (SPAP), consisting of APOA1, an immunoglobulin heavy chain, an immunoglobulin light chain and albumin. Interacts with NDRG1. Interacts with SCGB3A2. Interacts with NAXE and YJEFN3. Post-translationally, glycosylated. Palmitoylated. In terms of processing, phosphorylation sites are present in the extracellular medium.

It is found in the secreted. In terms of biological role, participates in the reverse transport of cholesterol from tissues to the liver for excretion by promoting cholesterol efflux from tissues and by acting as a cofactor for the lecithin cholesterol acyltransferase (LCAT). As part of the SPAP complex, activates spermatozoa motility. This Marmota monax (Woodchuck) protein is Apolipoprotein A-I (ApoA1).